The primary structure comprises 436 residues: Glutamyl-tRNA reductase (436 aa).

Residues 56–59, S114, 119–121, and Q125 contribute to the substrate site; these read TCNR and EAQ. C57 (nucleophile) is an active-site residue. 194–199 contributes to the NADP(+) binding site; sequence GAGEMI.

It belongs to the glutamyl-tRNA reductase family. Homodimer.

It catalyses the reaction (S)-4-amino-5-oxopentanoate + tRNA(Glu) + NADP(+) = L-glutamyl-tRNA(Glu) + NADPH + H(+). The protein operates within porphyrin-containing compound metabolism; protoporphyrin-IX biosynthesis; 5-aminolevulinate from L-glutamyl-tRNA(Glu): step 1/2. In terms of biological role, catalyzes the NADPH-dependent reduction of glutamyl-tRNA(Glu) to glutamate 1-semialdehyde (GSA). The chain is Glutamyl-tRNA reductase from Acidovorax sp. (strain JS42).